Reading from the N-terminus, the 171-residue chain is Large ribosomal subunit protein bL9 (171 aa).

The protein belongs to the bacterial ribosomal protein bL9 family.

Functionally, binds to the 23S rRNA. The chain is Large ribosomal subunit protein bL9 from Rickettsia peacockii (strain Rustic).